Here is a 1799-residue protein sequence, read N- to C-terminus: Bromodomain and WD repeat-containing protein 3 (1799 aa).

8 WD repeats span residues 170–209, 213–251, 255–297, 307–347, 353–393, 400–452, 456–495, and 502–542; these read IKMHKRILGHLSSVYCVAFDRSGRRIFTGSDDCLVKIWAT, RLLATLRGHSAEISDMAVNYENTLIAAGSCDKVVRVWCL, APVA…FWQW, RPVK…IYYL, EKIA…IWQY, SIVL…VWNS, QLLHTLSGHDDEVFVLEAHPFDQRIILSAGHDGNIFIWDL, and RNYF…LFGF. At S693 the chain carries Phosphoserine. Residues 766–912 form a disordered region; the sequence is KKPSYPIQRN…KKKKGGLVSM (147 aa). The span at 784–794 shows a compositional bias: basic residues; the sequence is SLRRTQRKRQH. Over residues 795–816 the composition is skewed to polar residues; that stretch reads TYLTRSNIEHNSQASSQTSGVQ. Residues 817–828 show a composition bias toward acidic residues; that stretch reads EDSDSSSEEDET. Residues 845-858 are compositionally biased toward low complexity; sequence SESSSSDSSSEYSD. The span at 875 to 884 shows a compositional bias: polar residues; sequence RQATQKIYSS. Phosphoserine occurs at positions 884 and 885. The span at 897–907 shows a compositional bias: basic residues; the sequence is KKPKQTKKKKG. One can recognise a Bromo 1 domain in the interval 1136–1243; sequence WGAHSRDEEC…DVLLRFIGDQ (108 aa). Disordered stretches follow at residues 1258–1291, 1321–1366, 1435–1482, and 1517–1723; these read EDPDSSDLEEDSEMVDLDSDGPGTSSGRRAKCRG, EPFR…IDTP, IQSQ…QNTS, and SPSS…AKRA. Residues 1260–1276 show a composition bias toward acidic residues; it reads PDSSDLEEDSEMVDLDS. The region spanning 1298–1427 is the Bromo 2 domain; the sequence is CNPDAWKKQC…ALFENHIKNI (130 aa). Residues 1333–1348 show a composition bias toward low complexity; sequence PVQQQQEGESSQSVPP. Positions 1438–1450 are enriched in basic residues; sequence QKRRRPRYRKRLR. Composition is skewed to low complexity over residues 1451–1463 and 1517–1530; these read SSSSSLSSSRAPS and SPSSFSGYSRSGNS. Phosphoserine occurs at positions 1574 and 1576. Residues 1584-1596 show a composition bias toward basic and acidic residues; that stretch reads GEEKEMKETKEQV. Residues 1598 to 1623 are compositionally biased toward low complexity; sequence LSSSESGELGSSLSSESTSGSDSDSE. The segment covering 1624-1640 has biased composition (basic and acidic residues); that stretch reads STSRTDQDYVDGDHDYS. 2 stretches are compositionally biased toward basic residues: residues 1646–1663 and 1681–1694; these read RPKRKLRKQHTNGKRNWK and RGGRGRGGRGRGGR. Residue S1760 is modified to Phosphoserine.

Functionally, plays a role in the regulation of cell morphology and cytoskeletal organization. Required in the control of cell shape. This Mus musculus (Mouse) protein is Bromodomain and WD repeat-containing protein 3 (Brwd3).